The chain runs to 765 residues: Probable exo-1,4-beta-xylosidase bxlB (765 aa).

An N-terminal signal peptide occupies residues 1 to 25; sequence MYSSNSRRAASILACIVSLTQLGFA. N-linked (GlcNAc...) asparagine glycosylation is found at N67 and N107. D293 is a catalytic residue. N345, N412, N423, N464, and N761 each carry an N-linked (GlcNAc...) asparagine glycan.

The protein belongs to the glycosyl hydrolase 3 family.

The protein localises to the secreted. It carries out the reaction Hydrolysis of (1-&gt;4)-beta-D-xylans, to remove successive D-xylose residues from the non-reducing termini.. Its pathway is glycan degradation; xylan degradation. Functionally, xylan 1,4-beta-xylosidase involved in the hydrolysis of xylan, a major structural heterogeneous polysaccharide found in plant biomass representing the second most abundant polysaccharide in the biosphere, after cellulose. This Aspergillus terreus (strain NIH 2624 / FGSC A1156) protein is Probable exo-1,4-beta-xylosidase bxlB (bxlB).